The primary structure comprises 321 residues: Nucleus-vacuole junction protein 1 (321 aa).

An N-terminal signal peptide occupies residues 1 to 22; that stretch reads MTRPPLVRGIFSLGLSVAVLKG. The interval 73 to 125 is TSC13-binding; that stretch reads ELSWRKVFNFISRQSSELDTRIYVLILLLSFLLPIAWTVLDGDRETTLEDKDN. Residues 94 to 114 traverse the membrane as a helical segment; it reads IYVLILLLSFLLPIAWTVLDG. Positions 139–195 are OSH1-binding; that stretch reads KHYNDGERAVLQFGKNRSEPIILSYKDMNVLEGEHEFTSKEEHSNSHLTSKSENALN. Residues Ser-156 and Ser-199 each carry the phosphoserine modification. Residues 211–275 are disordered; sequence LEEDKNEPNG…SLKSSTSFPI (65 aa). The VAC8-binding stretch occupies residues 233–321; it reads DCSSSSEVES…EQAYSQPFRY (89 aa). Basic and acidic residues predominate over residues 242 to 262; the sequence is SQSKCRKESTAEPDSLSRDTR. Residues 263 to 272 show a composition bias toward low complexity; that stretch reads TTSSLKSSTS. Phosphoserine is present on residues Ser-285 and Ser-298. A disordered region spans residues 299 to 321; sequence PTKSSNLDAQVNTEQAYSQPFRY.

As to quaternary structure, interacts with OSH1, TSC13 and VAC8.

The protein localises to the nucleus outer membrane. In terms of biological role, involved in the formation of nucleus-vacuole junctions (NVJs) during piecemeal microautophagy of the nucleus (PMN). NVJs are interorganelle interfaces mediated by NVJ1 in the nuclear envelope and VAC8 on the vacuole membrane. Together, NVJ1 and VAC8 form Velcro-like patches through which teardrop-like portions of the nucleus are pinched off into the vacuolar lumen and degraded by the PMN process. Also acts as an outer-nuclear membrane receptor for OSH1 and TSC13. The sequence is that of Nucleus-vacuole junction protein 1 (NVJ1) from Saccharomyces cerevisiae (strain ATCC 204508 / S288c) (Baker's yeast).